We begin with the raw amino-acid sequence, 181 residues long: Oligoribonuclease (181 aa).

One can recognise an Exonuclease domain in the interval 8-171 (LIWIDLEMTG…DDIRESVAEL (164 aa)). The active site involves Y129.

This sequence belongs to the oligoribonuclease family. As to quaternary structure, homodimer.

Its subcellular location is the cytoplasm. 3'-to-5' exoribonuclease specific for small oligoribonucleotides. This chain is Oligoribonuclease, found in Escherichia coli O157:H7.